Consider the following 190-residue polypeptide: MAKATTIKEALSRWEEKTGQKPSDAREIKLYAQIPPIEKMDASLSTLANCEKLSLSTNCIEKIANLNGLKNLRILSLGRNNIKNLNGLEAVGDTLEELWISYNFIEKLKGIHVMRKLKILYISNNLVKDWAEFVKLAELPCLEDLVFVGNPLEEKHSAEGNWIEEATKRVPKLKKLDGTPVIKEDEEEES.

Alanine 2 is modified (N-acetylalanine). LRR repeat units lie at residues 47–69, 70–93, 95–114, and 115–138; these read LANC…LNGL, KNLR…AVGD, LEEL…IHVM, and RKLK…KLAE. The residue at position 56 (serine 56) is a Phosphoserine.

This sequence belongs to the dynein light chain LC1-type family. Interacts with ZMYND10 (via C-terminus). Interacts with DNAH5, a outer arm dynein heavy chain. Interacts with tubulin located within the A-tubule of the outer doublets in a ATP-independent manner.

The protein localises to the cytoplasm. The protein resides in the cytoskeleton. Its subcellular location is the cilium axoneme. In terms of biological role, part of the multisubunit axonemal ATPase complexes that generate the force for cilia motility and govern beat frequency. Component of the outer arm dynein (ODA). May be involved in a mechanosensory feedback mechanism controlling ODA activity based on external conformational cues by tethering the outer arm dynein heavy chain (DNAH5) to the microtubule within the axoneme. Important for ciliary function in the airways and for the function of the cilia that produce the nodal flow essential for the determination of the left-right asymmetry. This chain is Dynein axonemal light chain 1, found in Rattus norvegicus (Rat).